Reading from the N-terminus, the 572-residue chain is E3 ubiquitin-protein ligase ZFP91 (572 aa).

The span at 1–12 (MPGETEEPRSPE) shows a compositional bias: basic and acidic residues. The interval 1–308 (MPGETEEPRS…PRLPKRRKKP (308 aa)) is disordered. A compositionally biased stretch (low complexity) spans 61–70 (AAAAAAAAAA). A compositionally biased stretch (basic residues) spans 72–85 (SRRRKAEYPRRRRS). 2 positions are modified to phosphoserine: serine 86 and serine 106. A compositionally biased stretch (basic and acidic residues) spans 122 to 131 (LTTDKDPKEE). A compositionally biased stretch (low complexity) spans 143–162 (SITTTRASRSWRSSSRTSIS). Residues 209–225 (SDEEEEEEEEMLISEEE) show a composition bias toward acidic residues. 2 stretches are compositionally biased toward basic and acidic residues: residues 226-247 (IPFK…ETPK) and 254-271 (KVKE…VEVE). Acidic residues predominate over residues 272 to 284 (VKEEENEIREDEE). 5 C2H2-type zinc fingers span residues 313–338 (VRCE…KYQH), 344–368 (YVCP…AKHH), 374–396 (YICE…RMIH), 402–424 (LQCE…MKKH), and 432–455 (FSCN…AKSH). The interaction with MAP3K14/NIK stretch occupies residues 340 to 370 (LKKKYVCPHPSCGRLFRLQKQLLRHAKHHTD).

It belongs to the krueppel C2H2-type zinc-finger protein family. Interacts with MAP3K14/NIK. As to expression, found in all the examined tissues including brain, heart, kidney, lung, liver, spleen, thymus, skeletal muscle, ovary and testis.

It is found in the nucleus. It catalyses the reaction S-ubiquitinyl-[E2 ubiquitin-conjugating enzyme]-L-cysteine + [acceptor protein]-L-lysine = [E2 ubiquitin-conjugating enzyme]-L-cysteine + N(6)-ubiquitinyl-[acceptor protein]-L-lysine.. It participates in protein modification; protein ubiquitination. In terms of biological role, atypical E3 ubiquitin-protein ligase that mediates 'Lys-63'-linked ubiquitination of MAP3K14/NIK, leading to stabilize and activate MAP3K14/NIK. It thereby acts as an activator of the non-canonical NF-kappa-B2/NFKB2 pathway. May also play an important role in cell proliferation and/or anti-apoptosis. This is E3 ubiquitin-protein ligase ZFP91 (Zfp91) from Mus musculus (Mouse).